The following is a 121-amino-acid chain: Large ribosomal subunit protein bL12 (121 aa).

Belongs to the bacterial ribosomal protein bL12 family. As to quaternary structure, homodimer. Part of the ribosomal stalk of the 50S ribosomal subunit. Forms a multimeric L10(L12)X complex, where L10 forms an elongated spine to which 2 to 4 L12 dimers bind in a sequential fashion. Binds GTP-bound translation factors.

Forms part of the ribosomal stalk which helps the ribosome interact with GTP-bound translation factors. Is thus essential for accurate translation. The protein is Large ribosomal subunit protein bL12 of Limosilactobacillus reuteri (strain DSM 20016) (Lactobacillus reuteri).